Consider the following 457-residue polypeptide: Solute carrier family 38 member 6 (457 aa).

An N-acetylmethionine modification is found at Met1. Residues Ser4 and Ser7 each carry the phosphoserine modification. 5 helical membrane-spanning segments follow: residues 48 to 68, 70 to 90, 112 to 132, 171 to 191, and 192 to 212; these read FGLS…LGLA, VMAN…ALLA, LGLF…IIIQ, LLII…KIGF, and LGYT…VVVI. A disulfide bond links Cys219 and Cys239. Helical transmembrane passes span 251–271, 289–309, 328–348, 372–392, 395–415, and 432–452; these read VYAI…LPIY, AIAL…LTFY, VIVM…APLI, SLTT…VPDI, VFGV…PGLF, and ALFL…LIIF.

It belongs to the amino acid/polyamine transporter 2 family. In terms of tissue distribution, expressed exclusively in neurons and not in astrocytes and glia cells. Highly expressed in the synapse. Highly expressed in glutamatergic neurons. Primarily expressed in excitatory neurons, with some minor expression in inhibitory neurons.

Its subcellular location is the cell membrane. It is found in the synapse. It catalyses the reaction L-glutamine(out) = L-glutamine(in). It carries out the reaction L-glutamate(out) = L-glutamate(in). Its function is as follows. Amino acid transporter with an apparent selectivity for L-glutamine and L-glutamate. May facilitate glutamine uptake in excitatory neurons. The transport mechanism remains to be elucidated. In Mus musculus (Mouse), this protein is Solute carrier family 38 member 6.